The following is a 387-amino-acid chain: 3-ketoacyl-CoA thiolase (387 aa).

The active-site Acyl-thioester intermediate is cysteine 91. Active-site proton acceptor residues include histidine 343 and cysteine 373.

This sequence belongs to the thiolase-like superfamily. Thiolase family. In terms of assembly, heterotetramer of two alpha chains (FadB) and two beta chains (FadA).

It localises to the cytoplasm. The catalysed reaction is an acyl-CoA + acetyl-CoA = a 3-oxoacyl-CoA + CoA. The protein operates within lipid metabolism; fatty acid beta-oxidation. Functionally, catalyzes the final step of fatty acid oxidation in which acetyl-CoA is released and the CoA ester of a fatty acid two carbons shorter is formed. The sequence is that of 3-ketoacyl-CoA thiolase from Escherichia coli O9:H4 (strain HS).